Consider the following 225-residue polypeptide: Uracil-DNA glycosylase 1 (225 aa).

Residue D68 is the Proton acceptor of the active site.

It belongs to the uracil-DNA glycosylase (UDG) superfamily. UNG family.

The protein localises to the cytoplasm. It catalyses the reaction Hydrolyzes single-stranded DNA or mismatched double-stranded DNA and polynucleotides, releasing free uracil.. In terms of biological role, excises uracil residues from the DNA which can arise as a result of misincorporation of dUMP residues by DNA polymerase or due to deamination of cytosine. The sequence is that of Uracil-DNA glycosylase 1 (ung1) from Streptomyces coelicolor (strain ATCC BAA-471 / A3(2) / M145).